Consider the following 486-residue polypeptide: Aspartyl/glutamyl-tRNA(Asn/Gln) amidotransferase subunit B (486 aa).

Belongs to the GatB/GatE family. GatB subfamily. Heterotrimer of A, B and C subunits.

The catalysed reaction is L-glutamyl-tRNA(Gln) + L-glutamine + ATP + H2O = L-glutaminyl-tRNA(Gln) + L-glutamate + ADP + phosphate + H(+). It catalyses the reaction L-aspartyl-tRNA(Asn) + L-glutamine + ATP + H2O = L-asparaginyl-tRNA(Asn) + L-glutamate + ADP + phosphate + 2 H(+). Its function is as follows. Allows the formation of correctly charged Asn-tRNA(Asn) or Gln-tRNA(Gln) through the transamidation of misacylated Asp-tRNA(Asn) or Glu-tRNA(Gln) in organisms which lack either or both of asparaginyl-tRNA or glutaminyl-tRNA synthetases. The reaction takes place in the presence of glutamine and ATP through an activated phospho-Asp-tRNA(Asn) or phospho-Glu-tRNA(Gln). The protein is Aspartyl/glutamyl-tRNA(Asn/Gln) amidotransferase subunit B of Leptospira borgpetersenii serovar Hardjo-bovis (strain JB197).